The following is a 113-amino-acid chain: UPF0145 protein MTH_544 (113 aa).

This sequence belongs to the UPF0145 family.

The protein is UPF0145 protein MTH_544 of Methanothermobacter thermautotrophicus (strain ATCC 29096 / DSM 1053 / JCM 10044 / NBRC 100330 / Delta H) (Methanobacterium thermoautotrophicum).